The primary structure comprises 115 residues: UPF0102 protein NMB2089 (115 aa).

It belongs to the UPF0102 family.

This is UPF0102 protein NMB2089 from Neisseria meningitidis serogroup B (strain ATCC BAA-335 / MC58).